The primary structure comprises 465 residues: Argininosuccinate lyase (465 aa).

This sequence belongs to the lyase 1 family. Argininosuccinate lyase subfamily.

It is found in the cytoplasm. The catalysed reaction is 2-(N(omega)-L-arginino)succinate = fumarate + L-arginine. It participates in amino-acid biosynthesis; L-arginine biosynthesis; L-arginine from L-ornithine and carbamoyl phosphate: step 3/3. The chain is Argininosuccinate lyase from Methanosphaera stadtmanae (strain ATCC 43021 / DSM 3091 / JCM 11832 / MCB-3).